Reading from the N-terminus, the 541-residue chain is Chaperonin GroEL 1 (541 aa).

ATP contacts are provided by residues 29 to 32, 86 to 90, glycine 413, 477 to 479, and aspartate 493; these read TLGP, DGTTT, and NAA.

The protein belongs to the chaperonin (HSP60) family. Forms a cylinder of 14 subunits composed of two heptameric rings stacked back-to-back. Interacts with the co-chaperonin GroES.

The protein localises to the cytoplasm. The enzyme catalyses ATP + H2O + a folded polypeptide = ADP + phosphate + an unfolded polypeptide.. Functionally, together with its co-chaperonin GroES, plays an essential role in assisting protein folding. The GroEL-GroES system forms a nano-cage that allows encapsulation of the non-native substrate proteins and provides a physical environment optimized to promote and accelerate protein folding. This chain is Chaperonin GroEL 1, found in Nocardioides sp. (strain ATCC BAA-499 / JS614).